The sequence spans 81 residues: Small cysteine-rich protein 6 (81 aa).

Residues 1–23 (MDTKVACLLLIILGALTVQGAVS) form the signal peptide. Positions 24-25 (GN) are excised as a propeptide.

The protein belongs to the Cnidaria small cysteine-rich protein (SCRiP) family. beta subfamily. Post-translationally, contains 4 disulfide bonds.

The protein localises to the secreted. Its subcellular location is the nematocyst. Its function is as follows. Induces neurotoxic symptoms on zebrafish. Has also been claimed to be implied in calcification, but tests on homolog proteins suggest that proteins of this family have a neurotoxic function and not a calcification function. This Orbicella faveolata (Mountainous star coral) protein is Small cysteine-rich protein 6.